Here is a 320-residue protein sequence, read N- to C-terminus: Variant surface glycoprotein ILTAT 1.2 (320 aa).

Residues asparagine 146, asparagine 282, and asparagine 295 are each glycosylated (N-linked (GlcNAc...) asparagine). Residues 297–320 form a disordered region; sequence TKATENGVPVAQTQTGGSETTTEK. A compositionally biased stretch (low complexity) spans 308-320; the sequence is QTQTGGSETTTEK.

The protein resides in the cell membrane. Its function is as follows. VSG forms a coat on the surface of the parasite. The trypanosome evades the immune response of the host by expressing a series of antigenically distinct VSGs from an estimated 1000 VSG genes. The protein is Variant surface glycoprotein ILTAT 1.2 of Trypanosoma brucei brucei.